The primary structure comprises 89 residues: UPF0335 protein Nwi_0989 (89 aa).

This sequence belongs to the UPF0335 family.

This is UPF0335 protein Nwi_0989 from Nitrobacter winogradskyi (strain ATCC 25391 / DSM 10237 / CIP 104748 / NCIMB 11846 / Nb-255).